The following is a 64-amino-acid chain: DNA gyrase inhibitor YacG (64 aa).

The Zn(2+) site is built by Cys-7, Cys-10, Cys-26, and Cys-30. Residues 44–64 (RIPGEIDPELLPYPEEGEQWQ) form a disordered region.

It belongs to the DNA gyrase inhibitor YacG family. In terms of assembly, interacts with GyrB. The cofactor is Zn(2+).

Functionally, inhibits all the catalytic activities of DNA gyrase by preventing its interaction with DNA. Acts by binding directly to the C-terminal domain of GyrB, which probably disrupts DNA binding by the gyrase. The protein is DNA gyrase inhibitor YacG of Aeromonas hydrophila subsp. hydrophila (strain ATCC 7966 / DSM 30187 / BCRC 13018 / CCUG 14551 / JCM 1027 / KCTC 2358 / NCIMB 9240 / NCTC 8049).